We begin with the raw amino-acid sequence, 84 residues long: UPF0457 protein BT9727_3043 (84 aa).

This sequence belongs to the UPF0457 family.

In Bacillus thuringiensis subsp. konkukian (strain 97-27), this protein is UPF0457 protein BT9727_3043.